The following is a 372-amino-acid chain: Queuine tRNA-ribosyltransferase (372 aa).

Asp-92 serves as the catalytic Proton acceptor. Substrate is bound by residues 92–96 (DSGGF), Asp-146, Gln-188, and Gly-215. An RNA binding region spans residues 246 to 252 (GIGTLRE). Residue Asp-265 is the Nucleophile of the active site. The segment at 270 to 274 (TRLGR) is RNA binding; important for wobble base 34 recognition. 4 residues coordinate Zn(2+): Cys-303, Cys-305, Cys-308, and His-334.

Belongs to the queuine tRNA-ribosyltransferase family. Homodimer. Within each dimer, one monomer is responsible for RNA recognition and catalysis, while the other monomer binds to the replacement base PreQ1. Zn(2+) is required as a cofactor.

It carries out the reaction 7-aminomethyl-7-carbaguanine + guanosine(34) in tRNA = 7-aminomethyl-7-carbaguanosine(34) in tRNA + guanine. The protein operates within tRNA modification; tRNA-queuosine biosynthesis. Functionally, catalyzes the base-exchange of a guanine (G) residue with the queuine precursor 7-aminomethyl-7-deazaguanine (PreQ1) at position 34 (anticodon wobble position) in tRNAs with GU(N) anticodons (tRNA-Asp, -Asn, -His and -Tyr). Catalysis occurs through a double-displacement mechanism. The nucleophile active site attacks the C1' of nucleotide 34 to detach the guanine base from the RNA, forming a covalent enzyme-RNA intermediate. The proton acceptor active site deprotonates the incoming PreQ1, allowing a nucleophilic attack on the C1' of the ribose to form the product. After dissociation, two additional enzymatic reactions on the tRNA convert PreQ1 to queuine (Q), resulting in the hypermodified nucleoside queuosine (7-(((4,5-cis-dihydroxy-2-cyclopenten-1-yl)amino)methyl)-7-deazaguanosine). This is Queuine tRNA-ribosyltransferase from Prochlorococcus marinus (strain MIT 9313).